Consider the following 76-residue polypeptide: Virulence-associated protein VagC (76 aa).

Residues 4 to 45 form the SpoVT-AbrB domain; it reads VSIFKNGNNRAIRLPRDLDFEGVSELEIVREGDSIILRPVRP.

Belongs to the VapB family.

This is Virulence-associated protein VagC (vagC) from Salmonella dublin.